A 577-amino-acid polypeptide reads, in one-letter code: Arginine--tRNA ligase (577 aa).

A 'HIGH' region motif is present at residues 122–132 (PNVAKEMHVGH).

It belongs to the class-I aminoacyl-tRNA synthetase family. As to quaternary structure, monomer.

The protein resides in the cytoplasm. It carries out the reaction tRNA(Arg) + L-arginine + ATP = L-arginyl-tRNA(Arg) + AMP + diphosphate. The polypeptide is Arginine--tRNA ligase (Aliivibrio fischeri (strain MJ11) (Vibrio fischeri)).